Consider the following 1070-residue polypeptide: DNA-directed RNA polymerase subunit beta (1070 aa).

The protein belongs to the RNA polymerase beta chain family. As to quaternary structure, in plastids the minimal PEP RNA polymerase catalytic core is composed of four subunits: alpha, beta, beta', and beta''. When a (nuclear-encoded) sigma factor is associated with the core the holoenzyme is formed, which can initiate transcription.

The protein resides in the plastid. The protein localises to the chloroplast. The catalysed reaction is RNA(n) + a ribonucleoside 5'-triphosphate = RNA(n+1) + diphosphate. Its function is as follows. DNA-dependent RNA polymerase catalyzes the transcription of DNA into RNA using the four ribonucleoside triphosphates as substrates. This chain is DNA-directed RNA polymerase subunit beta, found in Silene latifolia (White campion).